The following is a 613-amino-acid chain: Dihydroxy-acid dehydratase (613 aa).

Residue Asp-81 participates in Mg(2+) binding. Cys-122 serves as a coordination point for [2Fe-2S] cluster. Mg(2+) is bound by residues Asp-123 and Lys-124. Lys-124 carries the N6-carboxylysine modification. Cys-193 provides a ligand contact to [2Fe-2S] cluster. Residue Glu-489 participates in Mg(2+) binding. Ser-515 acts as the Proton acceptor in catalysis.

It belongs to the IlvD/Edd family. Homodimer. The cofactor is [2Fe-2S] cluster. Requires Mg(2+) as cofactor.

The enzyme catalyses (2R)-2,3-dihydroxy-3-methylbutanoate = 3-methyl-2-oxobutanoate + H2O. The catalysed reaction is (2R,3R)-2,3-dihydroxy-3-methylpentanoate = (S)-3-methyl-2-oxopentanoate + H2O. It functions in the pathway amino-acid biosynthesis; L-isoleucine biosynthesis; L-isoleucine from 2-oxobutanoate: step 3/4. Its pathway is amino-acid biosynthesis; L-valine biosynthesis; L-valine from pyruvate: step 3/4. Functionally, functions in the biosynthesis of branched-chain amino acids. Catalyzes the dehydration of (2R,3R)-2,3-dihydroxy-3-methylpentanoate (2,3-dihydroxy-3-methylvalerate) into 2-oxo-3-methylpentanoate (2-oxo-3-methylvalerate) and of (2R)-2,3-dihydroxy-3-methylbutanoate (2,3-dihydroxyisovalerate) into 2-oxo-3-methylbutanoate (2-oxoisovalerate), the penultimate precursor to L-isoleucine and L-valine, respectively. The polypeptide is Dihydroxy-acid dehydratase (Pseudomonas fluorescens (strain ATCC BAA-477 / NRRL B-23932 / Pf-5)).